Reading from the N-terminus, the 293-residue chain is MPWIQLRINTNSDDAETISDLLMEEGSVSITFEDGKDTPIFEPKLGETPLWRDTVVVALFDAETDLTPTIAMLKTLPFLGENFSHKVEQIEDKDWVREWMDNFHPIQFGTRLWICPSWREIPDPTAVNVILDPGLAFGTGTHPTTALCLEWLDSLDLSDEEVIDFGCGSGILAVAALKLGAKNVTGIDIDYQAIDASRANAERNDVADKLALYLPEDQPADLKADVLVANILAGPLRELAPLIAERVKTSGKLALSGLLKEQAQEISDFYSQWFDMDAAAHKEDWSRLTGKRK.

Residues T145, G166, D188, and N230 each contribute to the S-adenosyl-L-methionine site.

This sequence belongs to the methyltransferase superfamily. PrmA family.

Its subcellular location is the cytoplasm. The enzyme catalyses L-lysyl-[protein] + 3 S-adenosyl-L-methionine = N(6),N(6),N(6)-trimethyl-L-lysyl-[protein] + 3 S-adenosyl-L-homocysteine + 3 H(+). Functionally, methylates ribosomal protein L11. The protein is Ribosomal protein L11 methyltransferase of Shewanella baltica (strain OS195).